Here is a 204-residue protein sequence, read N- to C-terminus: Somatotropin (204 aa).

The first 17 residues, Met-1–Ser-17, serve as a signal peptide directing secretion. At Gln-18 the chain carries Pyrrolidone carboxylic acid. Zn(2+) is bound at residue His-35. Cys-69 and Cys-177 are joined by a disulfide. Glu-186 is a Zn(2+) binding site. Cys-194 and Cys-202 are disulfide-bonded.

It belongs to the somatotropin/prolactin family.

The protein localises to the secreted. In terms of biological role, growth hormone plays an important role in growth control and is involved in the regulation of several anabolic processes. Implicated as an osmoregulatory substance important for seawater adaptation. This Dicentrarchus labrax (European seabass) protein is Somatotropin (gh).